The following is a 477-amino-acid chain: Glycogen synthase (477 aa).

Position 15 (K15) interacts with ADP-alpha-D-glucose.

The protein belongs to the glycosyltransferase 1 family. Bacterial/plant glycogen synthase subfamily.

It catalyses the reaction [(1-&gt;4)-alpha-D-glucosyl](n) + ADP-alpha-D-glucose = [(1-&gt;4)-alpha-D-glucosyl](n+1) + ADP + H(+). It participates in glycan biosynthesis; glycogen biosynthesis. Functionally, synthesizes alpha-1,4-glucan chains using ADP-glucose. The sequence is that of Glycogen synthase from Myxococcus xanthus (strain DK1622).